A 648-amino-acid polypeptide reads, in one-letter code: Mitochondrial Rho GTPase 3 (648 aa).

Residues 1 to 621 lie on the Cytoplasmic side of the membrane; it reads MWMGVGDSSG…KRSCKLNNRS (621 aa). S11 carries the phosphoserine modification. The region spanning 12–179 is the Miro 1 domain; sequence PKPIRIVVVG…LYYAQKAVID (168 aa). 2 EF-hand domains span residues 195–230 and 316–351; these read RCIA…CFDT and VAIE…APES. Residues D208, N210, D212, E219, D329, N331, D333, N335, and E340 each coordinate Ca(2+). Residues 425–599 enclose the Miro 2 domain; the sequence is RKVVQCFVFG…FRKILTAAEN (175 aa). Residues 622–644 form a helical membrane-spanning segment; the sequence is LMAVSIGTAVLIAGLASFRLYTA. Residues 645 to 648 are Mitochondrial intermembrane-facing; the sequence is RKQS.

Belongs to the mitochondrial Rho GTPase family. Expressed at very low levels in roots, leaves, stems, flowers and siliques.

Its subcellular location is the mitochondrion outer membrane. Functionally, mitochondrial GTPase that may be involved in mitochondrion development. The protein is Mitochondrial Rho GTPase 3 of Arabidopsis thaliana (Mouse-ear cress).